Here is a 293-residue protein sequence, read N- to C-terminus: Putative serine protease 42 (293 aa).

An N-terminal signal peptide occupies residues 1 to 26; it reads MSSGGGSRGLLAWLLLLQPWPGQNWA. A disordered region spans residues 33 to 60; sequence LPSPLLSEEGGENPEASPAPGPEAGPPL. Residues 80-293 enclose the Peptidase S1 domain; sequence IVGGVDAEEG…IVSWGIGCGR (214 aa). A disulfide bond links C105 and C121. H120 acts as the Charge relay system in catalysis. N-linked (GlcNAc...) asparagine glycosylation occurs at N141. D166 acts as the Charge relay system in catalysis. A glycan (N-linked (GlcNAc...) asparagine) is linked at N177. 3 disulfide bridges follow: C200–C273, C232–C253, and C263–C291. The active-site Charge relay system is S267. A glycan (N-linked (GlcNAc...) asparagine) is linked at N276.

It belongs to the peptidase S1 family.

The protein resides in the cytoplasm. It localises to the cell membrane. Functionally, plays a role in spermatogenesis. Involved in germ cell survival during meiosis. The chain is Putative serine protease 42 from Homo sapiens (Human).